We begin with the raw amino-acid sequence, 1374 residues long: Serine/threonine-protein kinase LMTK1 (1374 aa).

The helical transmembrane segment at 32-52 (LAVVAVSFSGLFAVIVLMLAC) threads the bilayer. In terms of domain architecture, Protein kinase spans 125 to 395 (LLYLKEIGRG…PTAEEVHLLL (271 aa)). ATP is bound by residues 131-139 (IGRGWFGKV) and Lys156. Asp253 acts as the Proton acceptor in catalysis. At Ser495 the chain carries Phosphoserine. Disordered regions lie at residues 542-622 (GHDP…LAEG), 667-731 (VGAR…LLGL), 765-1195 (WTET…PAVP), 1245-1302 (QESP…AWDD), and 1320-1374 (AAPA…SKEA). The segment covering 606 to 620 (PSRSPSPSAGPLSLA) has biased composition (low complexity). The span at 680–690 (SNVSANNNSGS) shows a compositional bias: polar residues. 3 stretches are compositionally biased toward low complexity: residues 719-731 (PEPGYPGEPLLGL), 801-831 (SPSQEGAPLPSEEASAPDAPDALPDSPTPAT), and 847-856 (SSSSPEVEAP). Polar residues predominate over residues 865–878 (EATSGIFTDTSSDG). Over residues 900–914 (PDSLDSLDIPSSASD) the composition is skewed to low complexity. A compositionally biased stretch (polar residues) spans 978-987 (RLSTSLSGLN). The residue at position 1029 (Ser1029) is a Phosphoserine. Residues 1063–1073 (EGSSPEPSTCP) show a composition bias toward polar residues. A compositionally biased stretch (low complexity) spans 1138 to 1155 (TPRAPLRLALPGLPAALE). Over residues 1158 to 1173 (PEEEEEDSEDSDESDE) the composition is skewed to acidic residues. Phosphoserine is present on residues Ser1168, Ser1171, Ser1184, Ser1187, and Ser1262. A compositionally biased stretch (polar residues) spans 1272–1291 (GSPSAPNRPQQADGSPNGST). Residues 1321–1332 (APAPAAPTPTPA) are compositionally biased toward pro residues. Residues 1337–1352 (FTVSPAPTSRFSITHV) are compositionally biased toward polar residues. Basic and acidic residues predominate over residues 1353 to 1363 (SDSDAESKRGP). Residues 1365–1374 (AGAGGESKEA) are compositionally biased toward gly residues.

The protein belongs to the protein kinase superfamily. Tyr protein kinase family. In terms of assembly, interacts with CDK5. In terms of processing, autophosphorylated. Phosphorylated by CDK5. As to expression, expressed in brain.

It is found in the membrane. Its subcellular location is the cytoplasm. The protein resides in the perinuclear region. The catalysed reaction is L-seryl-[protein] + ATP = O-phospho-L-seryl-[protein] + ADP + H(+). It catalyses the reaction L-threonyl-[protein] + ATP = O-phospho-L-threonyl-[protein] + ADP + H(+). Functionally, may be involved in neuronal differentiation. In Homo sapiens (Human), this protein is Serine/threonine-protein kinase LMTK1 (AATK).